A 422-amino-acid polypeptide reads, in one-letter code: Phthiocerol/phthiodiolone dimycocerosyl transferase (422 aa).

His124 (proton acceptor) is an active-site residue.

It belongs to the acyltransferase PapA5 family. In terms of assembly, monomer. Interacts directly with the acyl carrier protein (ACP) domain of the mycocerosic acid synthase (mas) protein.

It catalyses the reaction 2 a mycocerosyl-[mycocerosic acid synthase] + a phthiocerol = a dimycocerosyl phthiocerol + 2 holo-[mycocerosic acid synthase].. The enzyme catalyses 2 a mycocerosyl-[mycocerosic acid synthase] + a phthiodiolone = a dimycocerosyl phthiodiolone + 2 holo-[mycocerosic acid synthase].. It carries out the reaction 2 a mycocerosyl-[mycocerosic acid synthase] + a phenolphthiocerol = a dimycocerosyl phenolphthiocerol + 2 holo-[mycocerosic acid synthase].. Catalyzes diesterification of phthiocerol, phthiodiolone, and phenolphthiocerol with mycocerosic acids, the final step in the phthiocerol, phthiodiolone and phenolphthiocerol dimycocerosate esters (PDIM) synthesis. Can directly transfer the mycocerosate bound to the mycocerosic acid synthase (mas) onto the substrate alcohols. This Mycobacterium tuberculosis (strain ATCC 25177 / H37Ra) protein is Phthiocerol/phthiodiolone dimycocerosyl transferase (papA5).